A 488-amino-acid chain; its full sequence is MAQSVQERTRLKNKRYESGVIPYAKMGYWNPNYVVKDSDMLALFRVTPQPGVDPIEAAAAVAGESSTATWTVVWTDLLTACDVYRAKAYRVDPVPTAPDQYFVYIAYDIDLFEEGSIANLTASIIGNVFGFKAVKALRLEDMRIPFSYLKTFQGPATGVIVERERLNKFGRPLLGCTVKPKLGLSGKNYGRVVYEGLKGGLDFLKDDENINSQPFMRWRDRYLYVMEGVNRAAAASGEVKGSYLNVTAATMEECYKRAEFAKEVGSVIIMIDLVIGYTAIQTMAIWARENNMILHLHRAGNSTYSRQKNHGINFRVISKWMRMAGVDHIHAGTVVGKLEGDPIIIKGFYNTLLLPKLEVNLPQGLFFEMDWASLRKTLPVASGGIHAGQMHQLLHYLGEDVVLQFGGGTIGHPDGIQAGATANRVALEAMVLARNEGRDYFNEGPQILRDAAKNCGPLQTALDLWKDIAFNYTSTDTSDFVETPTANV.

The substrate site is built by asparagine 127 and threonine 177. Lysine 179 functions as the Proton acceptor in the catalytic mechanism. Lysine 181 serves as a coordination point for substrate. Mg(2+) is bound by residues lysine 205, aspartate 207, and glutamate 208. Residue lysine 205 is modified to N6-carboxylysine. Histidine 297 serves as the catalytic Proton acceptor. The substrate site is built by arginine 298, histidine 330, and serine 382.

The protein belongs to the RuBisCO large chain family. Type I subfamily. In terms of assembly, heterohexadecamer of 8 large chains and 8 small chains. Mg(2+) serves as cofactor.

The protein resides in the plastid. The protein localises to the chloroplast. The catalysed reaction is 2 (2R)-3-phosphoglycerate + 2 H(+) = D-ribulose 1,5-bisphosphate + CO2 + H2O. It carries out the reaction D-ribulose 1,5-bisphosphate + O2 = 2-phosphoglycolate + (2R)-3-phosphoglycerate + 2 H(+). Functionally, ruBisCO catalyzes two reactions: the carboxylation of D-ribulose 1,5-bisphosphate, the primary event in carbon dioxide fixation, as well as the oxidative fragmentation of the pentose substrate in the photorespiration process. Both reactions occur simultaneously and in competition at the same active site. In Cyanidioschyzon merolae (strain NIES-3377 / 10D) (Unicellular red alga), this protein is Ribulose bisphosphate carboxylase large chain.